A 113-amino-acid polypeptide reads, in one-letter code: Cell cycle protein GpsB (113 aa).

Residues 32–70 (LDSVIKDYENFGKEIERMKNENDRLTDKVDELNKQVSAG) are a coiled coil.

It belongs to the GpsB family. In terms of assembly, forms polymers through the coiled coil domains. Interacts with PBP1, MreC and EzrA.

The protein resides in the cytoplasm. In terms of biological role, divisome component that associates with the complex late in its assembly, after the Z-ring is formed, and is dependent on DivIC and PBP2B for its recruitment to the divisome. Together with EzrA, is a key component of the system that regulates PBP1 localization during cell cycle progression. Its main role could be the removal of PBP1 from the cell pole after pole maturation is completed. Also contributes to the recruitment of PBP1 to the division complex. Not essential for septum formation. The protein is Cell cycle protein GpsB of Pediococcus pentosaceus (strain ATCC 25745 / CCUG 21536 / LMG 10740 / 183-1w).